A 94-amino-acid chain; its full sequence is Pyrimidine/purine nucleoside phosphorylase (94 aa).

This sequence belongs to the nucleoside phosphorylase PpnP family.

It catalyses the reaction a purine D-ribonucleoside + phosphate = a purine nucleobase + alpha-D-ribose 1-phosphate. The enzyme catalyses adenosine + phosphate = alpha-D-ribose 1-phosphate + adenine. The catalysed reaction is cytidine + phosphate = cytosine + alpha-D-ribose 1-phosphate. It carries out the reaction guanosine + phosphate = alpha-D-ribose 1-phosphate + guanine. It catalyses the reaction inosine + phosphate = alpha-D-ribose 1-phosphate + hypoxanthine. The enzyme catalyses thymidine + phosphate = 2-deoxy-alpha-D-ribose 1-phosphate + thymine. The catalysed reaction is uridine + phosphate = alpha-D-ribose 1-phosphate + uracil. It carries out the reaction xanthosine + phosphate = alpha-D-ribose 1-phosphate + xanthine. In terms of biological role, catalyzes the phosphorolysis of diverse nucleosides, yielding D-ribose 1-phosphate and the respective free bases. Can use uridine, adenosine, guanosine, cytidine, thymidine, inosine and xanthosine as substrates. Also catalyzes the reverse reactions. The protein is Pyrimidine/purine nucleoside phosphorylase of Salmonella heidelberg (strain SL476).